Consider the following 251-residue polypeptide: 2,3-bisphosphoglycerate-dependent phosphoglycerate mutase (251 aa).

Substrate-binding positions include 11-18, 24-25, R63, 90-93, K101, 117-118, and 185-186; these read RHGNSDWN, TG, ERHY, RR, and GN. Residue H12 is the Tele-phosphohistidine intermediate of the active site. The Proton donor/acceptor role is filled by E90. Residues 117 to 142 are disordered; sequence RRSFDVPPPPIDDDDEYSQSRDPRYA.

This sequence belongs to the phosphoglycerate mutase family. BPG-dependent PGAM subfamily.

It catalyses the reaction (2R)-2-phosphoglycerate = (2R)-3-phosphoglycerate. The protein operates within carbohydrate degradation; glycolysis; pyruvate from D-glyceraldehyde 3-phosphate: step 3/5. Its function is as follows. Catalyzes the interconversion of 2-phosphoglycerate and 3-phosphoglycerate. This is 2,3-bisphosphoglycerate-dependent phosphoglycerate mutase from Clavibacter michiganensis subsp. michiganensis (strain NCPPB 382).